We begin with the raw amino-acid sequence, 552 residues long: SQIRHYKWEVEYMFWAPNCNENIVMGINGQFPGPTIRANAGDSVVVELTNKLHTEGVVIHWHGILQRGTPWADGTASISQCAINPGETFFYNFTVDNPGTFFYHGHLGMQRSAGLYGSLIVDPPQGKKEPFHYDGEINLLLSDWWHQSIHKQEVGLSSKPIRWIGEPQTILLNGRGQFDCSIAAKYDSNLEPCKLKGSESCAPYIFHVSPKKTYRIRIASTTALAALNFAIGNHQLLVVEADGNYVQPFYTSDIDIYSGESYSVLITTDQNPSENYWVSVGTRARHPNTPPGLTLLNYLPNSVSKLPTSPPPQTPAWDDFDRSKNFTYRITAAMGSPKPPVKFNRRIFLLNTQNVINGYVKWAINDVSLALPPTPYLGAMKYNLLHAFDQNPPPEVFPEDYDIDTPPTNEKTRIGNGVYQFKIGEVVDVILQNANMMKENLSETHPWHLHGHDFWVLGYGDGKFSAEEESSLNLKNPPLRNTVVIFPYGWTAIRFVADNPGVWAFHCHIEPHLHMGMGVVFAEGVEKVGRIPTKALACGGTAKSLINNPKNP.

Plastocyanin-like domains lie at 1-122 (SQIR…LIVD) and 134-300 (DGEI…NYLP). 3 cysteine pairs are disulfide-bonded: cysteine 19–cysteine 201, cysteine 81–cysteine 538, and cysteine 180–cysteine 193. 2 residues coordinate Cu cation: histidine 60 and histidine 62. Asparagine 92 carries an N-linked (GlcNAc...) asparagine glycan. Cu cation contacts are provided by histidine 104 and histidine 106. Asparagine 325 and asparagine 440 each carry an N-linked (GlcNAc...) asparagine glycan. One can recognise a Plastocyanin-like 3 domain in the interval 344–523 (NRRIFLLNTQ…HMGMGVVFAE (180 aa)). 8 residues coordinate Cu cation: histidine 445, histidine 448, histidine 450, histidine 506, cysteine 507, histidine 508, histidine 512, and methionine 517.

It belongs to the multicopper oxidase family. As to quaternary structure, dimer. Requires Cu cation as cofactor.

The protein resides in the secreted. It catalyses the reaction 4 L-ascorbate + O2 = 4 monodehydro-L-ascorbate radical + 2 H2O. Functionally, may be involved in a redox system involving ascorbic acid. The protein is L-ascorbate oxidase of Cucurbita pepo var. melopepo (Zucchini).